Consider the following 885-residue polypeptide: Protein arg11, mitochondrial (885 aa).

The transit peptide at 1 to 59 (MLIELQQIVKSGLVRNGAKHCTKRSLLCSNASVIASKRFQGSFAPGQQQPLNPLAKPIE) directs the protein to the mitochondrion. An N-acetyltransferase domain is found at 346–499 (FVINKHDSLD…SDKPFADAII (154 aa)). The segment covering 503–523 (STKPPTASSTTNNPSSSQINQ) has biased composition (low complexity). The tract at residues 503-532 (STKPPTASSTTNNPSSSQINQKRSYSTSSL) is disordered. Cys703 is an active-site residue.

It in the N-terminal section; belongs to the acetylglutamate kinase family. The protein in the C-terminal section; belongs to the NAGSA dehydrogenase family. Post-translationally, the protein precursor is probably cleaved into the two biologically active enzymes, the kinase and the reductase.

Its subcellular location is the mitochondrion. The enzyme catalyses N-acetyl-L-glutamate 5-semialdehyde + phosphate + NADP(+) = N-acetyl-L-glutamyl 5-phosphate + NADPH + H(+). The catalysed reaction is N-acetyl-L-glutamate + ATP = N-acetyl-L-glutamyl 5-phosphate + ADP. Its pathway is amino-acid biosynthesis; L-arginine biosynthesis; N(2)-acetyl-L-ornithine from L-glutamate: step 2/4. It participates in amino-acid biosynthesis; L-arginine biosynthesis; N(2)-acetyl-L-ornithine from L-glutamate: step 3/4. Its activity is regulated as follows. The kinase activity is inhibited by arginine. The chain is Protein arg11, mitochondrial (arg11) from Schizosaccharomyces pombe (strain 972 / ATCC 24843) (Fission yeast).